A 2332-amino-acid chain; its full sequence is Phosphatidylinositol phosphatase PTPRQ (2332 aa).

A signal peptide spans 1–35; the sequence is MKKVPIKPEQPEKLRAFNISTHSFSLHWSLPSGHV. Fibronectin type-III domains follow at residues 36–99, 100–195, 199–294, 350–438, 441–539, 514–606, 610–705, 710–799, 804–894, 899–988, 993–1093, 1098–1190, 1192–1282, 1287–1380, 1384–1470, 1474–1578, 1583–1681, and 1686–1787; these read ERYQ…TKPG, PPVF…TAES, KVVN…SSST, PPQN…PPDV, AVFD…SHPD, GLYE…SVRT, VPSS…TSED, SPQD…TSET, APEN…TEED, PPQD…TPEG, PPKD…TDQD, FVGN…TEED, PETS…TDES, PPQN…TQES, VVQN…LPET, VPTN…TLPG, PPEN…TLES, and PPNN…IKAP. Topologically, residues 36 to 1947 are extracellular; the sequence is ERYQVDLVPD…GEGLSERTVE (1912 aa). N94 is a glycosylation site (N-linked (GlcNAc...) asparagine). Residues N202 and N394 are each glycosylated (N-linked (GlcNAc...) asparagine). 4 N-linked (GlcNAc...) asparagine glycosylation sites follow: N944, N1038, N1080, and N1101. N-linked (GlcNAc...) asparagine glycans are attached at residues N1290 and N1295. The N-linked (GlcNAc...) asparagine glycan is linked to N1844. Residues 1948–1968 traverse the membrane as a helical segment; that stretch reads IILSVTLCILSIILLGTAIFA. The Cytoplasmic segment spans residues 1969 to 2332; it reads FARIRQKQKE…VELEWEETTM (364 aa). The 257-residue stretch at 2036–2292 folds into the Tyrosine-protein phosphatase domain; that stretch reads FQEEFSELPK…IFLHQCILDL (257 aa). The active-site Phosphocysteine intermediate is C2233.

This sequence belongs to the protein-tyrosine phosphatase family. Receptor class 2A subfamily. In terms of assembly, interacts with TPRN. TPRN, CLIC5 and PTPQR form concentric rings at the base of stereocilia and may form a complex. In terms of tissue distribution, in developing kidney, it localizes to the basal membrane of podocytes, beginning when podocyte progenitors can first be identified in the embryonic kidney (at protein level). Expressed in lung and kidney.

Its subcellular location is the cell projection. It localises to the stereocilium. It is found in the apical cell membrane. The protein resides in the basal cell membrane. It catalyses the reaction a 1,2-diacyl-sn-glycero-3-phospho-(1D-myo-inositol-3,4,5-trisphosphate) + H2O = a 1,2-diacyl-sn-glycero-3-phospho-(1D-myo-inositol-4,5-bisphosphate) + phosphate. The catalysed reaction is a 1,2-diacyl-sn-glycero-3-phospho-(1D-myo-inositol-3,4,5-trisphosphate) + H2O = a 1,2-diacyl-sn-glycero-3-phospho-(1D-myo-inositol-3,4-bisphosphate) + phosphate. It carries out the reaction a 1,2-diacyl-sn-glycero-3-phospho-(1D-myo-inositol-3,5-bisphosphate) + H2O = a 1,2-diacyl-sn-glycero-3-phospho-(1D-myo-inositol-5-phosphate) + phosphate. The enzyme catalyses a 1,2-diacyl-sn-glycero-3-phospho-(1D-myo-inositol-3,5-bisphosphate) + H2O = a 1,2-diacyl-sn-glycero-3-phospho-(1D-myo-inositol-3-phosphate) + phosphate. Functionally, dephosphorylates phosphatidylinositol phosphates, such as phosphatidylinositol 3,4,5-trisphosphate (PIP3) and phosphatidylinositol 3,5-diphosphates, with preference for PIP3. Phosphate can be hydrolyzed from the D3 and D5 positions in the inositol ring. Has low tyrosine-protein phosphatase activity in vitro; however, the relevance of such activity in vivo is unclear. Plays an important role in adipogenesis of mesenchymal stem cells (MSCs). Regulates the phosphorylation state of AKT1 by regulating the levels of PIP3 in MSCs and preadipocyte cells. Required for hair bundle maturation, a process that enables hair cells to detect and transmit sound and balance signals effectively, therefore affecting auditory function. May act by regulating the level of phosphatidylinositol 4,5-bisphosphate (PIP2) level in the basal region of hair bundles. The sequence is that of Phosphatidylinositol phosphatase PTPRQ (PTPRQ) from Homo sapiens (Human).